Consider the following 155-residue polypeptide: CASP-like protein 5B2 (155 aa).

Residues 1–18 are Cytoplasmic-facing; that stretch reads MWEVAWWRPGTWGGLAMR. Residues 19–39 traverse the membrane as a helical segment; sequence VGQVAFAGASIGVMASGAGFA. A glycan (N-linked (GlcNAc...) asparagine) is linked at N40. Topologically, residues 40–43 are extracellular; that stretch reads NYTA. A helical transmembrane segment spans residues 44–64; sequence FCYLIASMGLQSLWSLGLACL. At 65–77 the chain is on the cytoplasmic side; that stretch reads DVYALTVKRDLNN. Residues 78 to 98 form a helical membrane-spanning segment; the sequence is ALLVSLFVIGDWVTALLSFAA. The Extracellular segment spans residues 99–128; that stretch reads SCSAGGVMVLFKRDVLFCRRYPQLPCGRFE. Residues 129 to 149 traverse the membrane as a helical segment; the sequence is LAVALAFLSWALSATSAIIMF. The Cytoplasmic portion of the chain corresponds to 150–155; it reads CLLAAF.

This sequence belongs to the Casparian strip membrane proteins (CASP) family. As to quaternary structure, homodimer and heterodimers.

The protein resides in the cell membrane. This is CASP-like protein 5B2 from Oryza sativa subsp. indica (Rice).